The sequence spans 233 residues: Ribitol-5-phosphate cytidylyltransferase (233 aa).

CTP is bound by residues 7–10 and 80–86; these read LAGG and GADRNET.

The protein belongs to the IspD/TarI cytidylyltransferase family. TarI subfamily.

It carries out the reaction D-ribitol 5-phosphate + CTP + H(+) = CDP-L-ribitol + diphosphate. It participates in cell wall biogenesis; poly(ribitol phosphate) teichoic acid biosynthesis. Catalyzes the transfer of the cytidylyl group of CTP to D-ribitol 5-phosphate. The polypeptide is Ribitol-5-phosphate cytidylyltransferase (Lactiplantibacillus plantarum (strain ATCC BAA-793 / NCIMB 8826 / WCFS1) (Lactobacillus plantarum)).